A 60-amino-acid chain; its full sequence is Mastoparan-B (60 aa).

Residues 1–27 form the signal peptide; that stretch reads MKNTILILFTAFIALLGFFGMSAEALA. AXPX repeat units lie at residues 27 to 30, 31 to 34, 35 to 38, and 41 to 44; these read ADPL, AEPL, ADPN, and ADPE. Residues 28-45 constitute a propeptide that is removed on maturation; the sequence is DPLAEPLADPNAEADPEA. The residue at position 59 (L59) is a Leucine amide.

Belongs to the MCD family. Mastoparan subfamily. Expressed by the venom gland.

It is found in the secreted. It localises to the target cell membrane. Its function is as follows. Antimicrobial and mast cell degranulating peptide. Has broad spectrum antibacterial activity against both Gram-positive (S.aureus MIC=96-128 ug/ml, S.xylosus MIC=2 ug/ml, S.alactolyticus MIC=32 ug/ml, and S.choleraesuis MIC=32 ug/ml) and Gram-negative bacteria (C.koseri MIC=6 ug/ml, E.coli MIC=3-16 ug/ml, K.pneumoniae MIC=128 ug/ml, P.aerugiosa MIC=128 ug/ml, S.typhimurium MIC=64 ug/ml, V.parahamelytics MIC=32 ug/ml, and S.enterica), as well as on fungi (C.albicans, C.glabrata, and C.neoformans). Does not show antimicrobial activity against S.mutans. Affects membrane permeability of E.coli. Also acts as a mast cell degranulating peptide, that causes liberation of histamine from rat peritoneal mast cells. Its mast cell degranulation activity may be related to the activation of G-protein coupled receptors in mast cells as well as interaction with other proteins located in cell endosomal membranes in the mast cells. Whether this peptide shows hemolytic activities is controversial, as Lin et al., 2011 and Ho et al., 1991 found a hemolytic activity on sheep, chicken and human erythrocytes, whereas Kim et al., 2016 found no hemolytic activity on human erythrocytes. In vivo, induces edema in the rat paw. This Vespa basalis (Hornet) protein is Mastoparan-B.